Here is a 1156-residue protein sequence, read N- to C-terminus: Protein hu-li tai shao (1156 aa).

Residues 1–36 (MTEVEQPPQNGIDPTAGEDDDNSKARPADIEQDMRE) form a disordered region. A compositionally biased stretch (basic and acidic residues) spans 22–36 (NSKARPADIEQDMRE). Residue Ser478 is modified to Phosphoserine. Residues Thr480 and Thr498 each carry the phosphothreonine modification. A Phosphoserine modification is found at Ser603. The residue at position 608 (Tyr608) is a Phosphotyrosine. Thr609 and Thr611 each carry phosphothreonine. Ser614 bears the Phosphoserine mark. At Tyr627 the chain carries Phosphotyrosine. Ser630 carries the phosphoserine modification. The tract at residues 897–956 (FLPSNHALPKDTDANNRDQTDRERPEAEQEESFHCAGDSGIGDSTGRRPRLATTSNDSSI) is disordered. Over residues 904 to 929 (LPKDTDANNRDQTDRERPEAEQEESF) the composition is skewed to basic and acidic residues.

The protein belongs to the aldolase class II family. Adducin subfamily. In terms of tissue distribution, isoform C is expressed in nurse cells. Isoform A is produced in the nurse cell but transported into the oocyte at stage 1, localizes to the oocyte cortex at stage 8 and to the anterior pole from day 9 onwards. Isoform B is expressed in the somatic follicle cells that surround the germline.

The protein resides in the cytoplasm. It localises to the cytoskeleton. Its subcellular location is the cell membrane. In terms of biological role, required for assembling actin at ring canals in developing egg chambers. Probably interacts with other developmental proteins involved in nurse cell/oocyte transport through the ring canals. Important for normal neuromotor function. The sequence is that of Protein hu-li tai shao (hts) from Drosophila melanogaster (Fruit fly).